The chain runs to 204 residues: Holliday junction branch migration complex subunit RuvA (204 aa).

A domain I region spans residues 1–64 (MIGKLKGTIE…EDQIRLFGFM (64 aa)). The segment at 65–143 (AVLEREWFNL…AFAGEATNIG (79 aa)) is domain II. The segment at 144 to 151 (FKQELGEG) is flexible linker. The segment at 152 to 204 (VAPAPVSDAVSALTNLGYSRDQAANAIAAAMKVAGDEADSAKLIRLGLKELSR) is domain III.

The protein belongs to the RuvA family. As to quaternary structure, homotetramer. Forms an RuvA(8)-RuvB(12)-Holliday junction (HJ) complex. HJ DNA is sandwiched between 2 RuvA tetramers; dsDNA enters through RuvA and exits via RuvB. An RuvB hexamer assembles on each DNA strand where it exits the tetramer. Each RuvB hexamer is contacted by two RuvA subunits (via domain III) on 2 adjacent RuvB subunits; this complex drives branch migration. In the full resolvosome a probable DNA-RuvA(4)-RuvB(12)-RuvC(2) complex forms which resolves the HJ.

The protein resides in the cytoplasm. The RuvA-RuvB-RuvC complex processes Holliday junction (HJ) DNA during genetic recombination and DNA repair, while the RuvA-RuvB complex plays an important role in the rescue of blocked DNA replication forks via replication fork reversal (RFR). RuvA specifically binds to HJ cruciform DNA, conferring on it an open structure. The RuvB hexamer acts as an ATP-dependent pump, pulling dsDNA into and through the RuvAB complex. HJ branch migration allows RuvC to scan DNA until it finds its consensus sequence, where it cleaves and resolves the cruciform DNA. The chain is Holliday junction branch migration complex subunit RuvA from Rhizobium rhizogenes (strain K84 / ATCC BAA-868) (Agrobacterium radiobacter).